The following is a 138-amino-acid chain: MKSFVLATCLLGFAQIIYADNKELKIIRKDVAECLRTLPKCGNQPDDPLARVDVWHCAMAKRGVYDNPDPAVIKERSMKMCTKIITDPANVENCKKVASRCVDRETQGPKSNRQKAVNIIGCALRAGVAETTVLARKK.

The first 19 residues, 1–19 (MKSFVLATCLLGFAQIIYA), serve as a signal peptide directing secretion. Intrachain disulfides connect C34/C57, C81/C94, and C101/C122.

It belongs to the ant venom allergen 2/4 family. Homodimer; disulfide-linked. As to expression, expressed by the venom gland.

The protein localises to the secreted. This is Venom allergen 2 from Solenopsis invicta (Red imported fire ant).